A 162-amino-acid polypeptide reads, in one-letter code: Probable chemoreceptor glutamine deamidase CheD (162 aa).

It belongs to the CheD family.

It carries out the reaction L-glutaminyl-[protein] + H2O = L-glutamyl-[protein] + NH4(+). In terms of biological role, probably deamidates glutamine residues to glutamate on methyl-accepting chemotaxis receptors (MCPs), playing an important role in chemotaxis. This Clostridium novyi (strain NT) protein is Probable chemoreceptor glutamine deamidase CheD.